The following is a 161-amino-acid chain: 2-C-methyl-D-erythritol 2,4-cyclodiphosphate synthase (161 aa).

Positions 14 and 16 each coordinate a divalent metal cation. Residues 14 to 16 (DVH) and 40 to 41 (HS) each bind 4-CDP-2-C-methyl-D-erythritol 2-phosphate. Histidine 48 is a binding site for a divalent metal cation. 4-CDP-2-C-methyl-D-erythritol 2-phosphate is bound by residues 62–64 (DLG), phenylalanine 142, and arginine 145.

It belongs to the IspF family. As to quaternary structure, homotrimer. It depends on a divalent metal cation as a cofactor.

It carries out the reaction 4-CDP-2-C-methyl-D-erythritol 2-phosphate = 2-C-methyl-D-erythritol 2,4-cyclic diphosphate + CMP. The protein operates within isoprenoid biosynthesis; isopentenyl diphosphate biosynthesis via DXP pathway; isopentenyl diphosphate from 1-deoxy-D-xylulose 5-phosphate: step 4/6. In terms of biological role, involved in the biosynthesis of isopentenyl diphosphate (IPP) and dimethylallyl diphosphate (DMAPP), two major building blocks of isoprenoid compounds. Catalyzes the conversion of 4-diphosphocytidyl-2-C-methyl-D-erythritol 2-phosphate (CDP-ME2P) to 2-C-methyl-D-erythritol 2,4-cyclodiphosphate (ME-CPP) with a corresponding release of cytidine 5-monophosphate (CMP). This Acidothermus cellulolyticus (strain ATCC 43068 / DSM 8971 / 11B) protein is 2-C-methyl-D-erythritol 2,4-cyclodiphosphate synthase.